We begin with the raw amino-acid sequence, 152 residues long: Transcriptional repressor NrdR (152 aa).

A zinc finger lies at 3-34; that stretch reads CPYCQHPDSDVIDTRKLHNGETIRRRRKCEAC. The region spanning 49–139 is the ATP-cone domain; it reads ITVVKKNGER…VYRSFADIGK (91 aa).

Belongs to the NrdR family. The cofactor is Zn(2+).

Its function is as follows. Negatively regulates transcription of bacterial ribonucleotide reductase nrd genes and operons by binding to NrdR-boxes. The protein is Transcriptional repressor NrdR of Roseiflexus castenholzii (strain DSM 13941 / HLO8).